We begin with the raw amino-acid sequence, 180 residues long: Putative 5'(3')-deoxyribonucleotidase (180 aa).

Aspartate 9 (nucleophile) is an active-site residue. Aspartate 9, aspartate 11, and aspartate 135 together coordinate Mg(2+). Aspartate 11 functions as the Proton donor in the catalytic mechanism.

The protein belongs to the 5'(3')-deoxyribonucleotidase family. It depends on Mg(2+) as a cofactor.

Dephosphorylates the 5' and 2'(3')-phosphates of deoxyribonucleotides. The polypeptide is Putative 5'(3')-deoxyribonucleotidase (Staphylococcus aureus (strain Mu50 / ATCC 700699)).